The primary structure comprises 492 residues: Pyrin and HIN domain-containing protein 1 (492 aa).

One can recognise a Pyrin domain in the interval 1-88; sequence MANNYKKIVL…AETLKREKLK (88 aa). 2 disordered regions span residues 106–199 and 400–492; these read KTKQ…KPLA and KNTN…PAVP. Over residues 142 to 159 the composition is skewed to basic and acidic residues; the sequence is PSEEETGTKRSKMSKEQT. A compositionally biased stretch (polar residues) spans 160 to 173; sequence RPSCSAGASTSTAM. The segment covering 181–194 has biased composition (low complexity); it reads TSSSAPPNTSSTES. Positions 199–399 constitute an HIN-200 domain; it reads ANRHATASKN…SEMHSFIQIQ (201 aa). Polar residues-rich tracts occupy residues 416–432 and 460–492; these read QEQS…TTLP and GAQS…PAVP.

This sequence belongs to the HIN-200 family. Interacts with MDM2. As to expression, expressed in spleen, lymph node and peripheral blood leukocytes, and at lower levels in thymus, bone marrow and fetal liver. Down-regulated in breast tumors.

It localises to the nucleus. The protein localises to the nucleoplasm. Its subcellular location is the nucleus speckle. Functionally, major mediator of the tumor suppressor activity of IFN in breast cancer cells. Promotes ubiquitination and subsequent degradation of MDM2, which leads to p53/TP53 stabilization. Promotes ubiquitination and subsequent degradation of HDAC1, which in turn enhances maspin expression, and impairs invasive activity of cancer cells. The chain is Pyrin and HIN domain-containing protein 1 (PYHIN1) from Homo sapiens (Human).